Consider the following 1064-residue polypeptide: Lysine-specific demethylase 4A (1064 aa).

Alanine 2 carries the post-translational modification N-acetylalanine. Residues 14–56 (IMTFYPTMEEFRNFSRYIAYIESQGAHRAGLAKVVPPKEWKPR) enclose the JmjN domain. A 2-oxoglutarate-binding site is contributed by tyrosine 132. The JmjC domain maps to 142–308 (EKHVDEWNIG…YGKQAVLCSC (167 aa)). Fe cation-binding residues include histidine 188 and glutamate 190. Asparagine 198 and lysine 206 together coordinate 2-oxoglutarate. Residues cysteine 234 and histidine 240 each contribute to the Zn(2+) site. Lysine 241 provides a ligand contact to 2-oxoglutarate. Fe cation is bound at residue histidine 276. Zn(2+) contacts are provided by cysteine 306 and cysteine 308. A disordered region spans residues 358-384 (ELPPRAGNEEECPEEDMEGVEDGEEGD). Residues 366–382 (EEECPEEDMEGVEDGEE) show a composition bias toward acidic residues. A (Microbial infection) Glycyl lysine isopeptide (Lys-Gly) (interchain with G-Cter in SUMO) cross-link involves residue lysine 471. Disordered regions lie at residues 501 to 537 (FSGS…RAQG) and 616 to 641 (SDDE…KPLS). Low complexity predominate over residues 509–532 (SSSLGSGSSRDSISSDSETSEPLS). The residue at position 523 (serine 523) is a Phosphoserine. The interaction with NCOR1 stretch occupies residues 597 to 638 (RQPLSKLPRHHPLVLQECVSDDETSEQLTPEEEAEETEAWAK). The segment covering 616–634 (SDDETSEQLTPEEEAEETE) has biased composition (acidic residues). A PHD-type 1 zinc finger spans residues 709–767 (MCFTSTGCSTDINLSTPYLEEDGTSILVSCKKCSVRVHASCYGVPPAKASEDWMCSRCS). The segment at 772–805 (EEDCCLCSLRGGALQRANDDRWVHVSCAVAILEA) adopts a C2HC pre-PHD-type zinc-finger fold. The PHD-type 2 zinc finger occupies 828 to 885 (LKCIFCKKRRKRTAGCCVQCSHGRCPTAFHVSCAQAAGVMMQPDDWPFVVFITCFRHK). 2 consecutive Tudor domains span residues 897–954 (QSIT…CLQF) and 955–1011 (GPPA…EELP).

Belongs to the JHDM3 histone demethylase family. Interacts with histone deacetylase proteins HDAC1, HDAC2 and HDAC3. Interacts with RB and NCOR1. Interacts with VRK1. Interacts with FBXO22; this interaction promotes KDM4A ubiquitination. In terms of assembly, (Microbial infection) Interacts with HTLV-1 Tax protein. The cofactor is Fe(2+). (Microbial infection) SUMOylated by human herpesvirus 8 E3 SUMO-protein ligase K-bZIP/K8 at Lys-471; thereby modulating the chromatin binding and histone demethylase activity of KDM4A. Post-translationally, ubiquitinated by RNF8 and RNF168 following DNA damage, leading to its degradation. Degradation promotes accessibility of H4K20me2 mark for DNA repair protein TP53BP1, which is then recruited. Also ubiquitinated by the SCF(FBXO22) complex; leading to proteasomal degradation. In terms of tissue distribution, ubiquitous.

The protein localises to the nucleus. It carries out the reaction N(6),N(6),N(6)-trimethyl-L-lysyl(9)-[histone H3] + 2 2-oxoglutarate + 2 O2 = N(6)-methyl-L-lysyl(9)-[histone H3] + 2 formaldehyde + 2 succinate + 2 CO2. The enzyme catalyses N(6),N(6),N(6)-trimethyl-L-lysyl(36)-[histone H3] + 2 2-oxoglutarate + 2 O2 = N(6)-methyl-L-lysyl(36)-[histone H3] + 2 formaldehyde + 2 succinate + 2 CO2. With respect to regulation, several specific inhibitors are being developed and tested. Its function is as follows. Histone demethylase that specifically demethylates 'Lys-9' and 'Lys-36' residues of histone H3, thereby playing a central role in histone code. Does not demethylate histone H3 'Lys-4', H3 'Lys-27' nor H4 'Lys-20'. Demethylates trimethylated H3 'Lys-9' and H3 'Lys-36' residue, while it has no activity on mono- and dimethylated residues. Demethylation of Lys residue generates formaldehyde and succinate. Participates in transcriptional repression of ASCL2 and E2F-responsive promoters via the recruitment of histone deacetylases and NCOR1, respectively. Crucial for muscle differentiation, promotes transcriptional activation of the Myog gene by directing the removal of repressive chromatin marks at its promoter. Lacks the N-terminal demethylase domain. The sequence is that of Lysine-specific demethylase 4A (KDM4A) from Homo sapiens (Human).